The chain runs to 233 residues: Large ribosomal subunit protein uL1 (233 aa).

This sequence belongs to the universal ribosomal protein uL1 family. Part of the 50S ribosomal subunit.

Functionally, binds directly to 23S rRNA. The L1 stalk is quite mobile in the ribosome, and is involved in E site tRNA release. Protein L1 is also a translational repressor protein, it controls the translation of the L11 operon by binding to its mRNA. The polypeptide is Large ribosomal subunit protein uL1 (Shewanella loihica (strain ATCC BAA-1088 / PV-4)).